The following is an 869-amino-acid chain: Speckle targeted PIP5K1A-regulated poly(A) polymerase (869 aa).

The Matrin-type zinc-finger motif lies at 16–46; it reads FRCCLCHVTTANRPSLDAHLGGRKHRHLVEL. An RRM domain is found at 56–128; sequence RSVFVSGFPR…HRLRVRPREQ (73 aa). Residues 111–147 are disordered; that stretch reads QPQHTLGGHRLRVRPREQKEFQSPASKSPKGAAPDSH. Ser-205 is a binding site for ATP. Residues Asp-216 and Asp-218 each contribute to the Mg(2+) site. Asp-216 and Asp-218 together coordinate UTP. The segment at 252–315 is disordered; sequence QALACTPASP…PASPLQEDRG (64 aa). The span at 259–269 shows a compositional bias: pro residues; that stretch reads ASPPDSQPPSP. Positions 279-290 are enriched in polar residues; the sequence is TPSSSLAPQTPD. An ATP-binding site is contributed by Asn-391. UTP-binding residues include Asn-391, Arg-413, Tyr-431, and His-548. One can recognise a PAP-associated domain in the interval 490–548; the sequence is LSSLLAQFFSCVSCWDLRGSLLSLREGQALPVAGDLPSNRWEGLRLGPMNLQDPFDLSH. The KA1; binds the bulging loops of U6 snRNA but is dispensable for terminal uridylyltransferase activity stretch occupies residues 597–869; sequence SSPSSLLSAT…VFLPQALRNL (273 aa). Composition is skewed to basic and acidic residues over residues 637–648 and 660–686; these read GTKRLRSDRGGP and LKLD…HSED. Disordered regions lie at residues 637–686 and 720–755; these read GTKR…HSED and LATG…TGRG. A phosphoserine mark is found at Ser-684 and Ser-748.

This sequence belongs to the DNA polymerase type-B-like family. In terms of assembly, associates with the cleavage and polyadenylation specificity factor (CPSF) complex. Interacts with CPSF1 and CPSF3; the interaction is direct. Interacts with PIP5K1A. It depends on Mg(2+) as a cofactor. The cofactor is Mn(2+). Phosphorylated by CK1 in the proline-rich (Pro-rich) region.

It is found in the nucleus. The protein resides in the nucleolus. The protein localises to the nucleus speckle. It carries out the reaction RNA(n) + UTP = RNA(n)-3'-uridine ribonucleotide + diphosphate. The enzyme catalyses RNA(n) + ATP = RNA(n)-3'-adenine ribonucleotide + diphosphate. Adenylyltransferase activity is specifically phosphatidylinositol 4,5-bisphosphate (PtdIns(4,5)P2). In terms of biological role, poly(A) polymerase that creates the 3'-poly(A) tail of specific pre-mRNAs. Localizes to nuclear speckles together with PIP5K1A and mediates polyadenylation of a select set of mRNAs, such as HMOX1. In addition to polyadenylation, it is also required for the 3'-end cleavage of pre-mRNAs: binds to the 3'UTR of targeted pre-mRNAs and promotes the recruitment and assembly of the CPSF complex on the 3'UTR of pre-mRNAs. In addition to adenylyltransferase activity, also has uridylyltransferase activity. However, the ATP ratio is higher than UTP in cells, suggesting that it functions primarily as a poly(A) polymerase. Acts as a specific terminal uridylyltransferase for U6 snRNA in vitro: responsible for a controlled elongation reaction that results in the restoration of the four 3'-terminal UMP-residues found in newly transcribed U6 snRNA. Not involved in replication-dependent histone mRNA degradation. This Ailuropoda melanoleuca (Giant panda) protein is Speckle targeted PIP5K1A-regulated poly(A) polymerase (TUT1).